We begin with the raw amino-acid sequence, 252 residues long: Chaplin-A (252 aa).

Positions 1-20 (MVAAAAATGILSLCGSPALA) are cleaved as a signal peptide. The region spanning 31–71 (SPGAVSGNALQVPVDVPVNACGNTVDVIAALNPAFGNECEN) is the Chaplin 1 domain. 2 disordered regions span residues 71–121 (NASD…GNNA) and 150–224 (CEND…GSEG). Residues 86–108 (EDASSSSSSSTSASSSGSHADGA) show a composition bias toward low complexity. The region spanning 112–152 (SPGVGSGNNAQVPVDVPVNLCGNTVDVIAALNPVFGNKCEN) is the Chaplin 2 domain. Over residues 153–165 (DAEEPPGYGEEEP) the composition is skewed to acidic residues. The span at 210 to 224 (QTEQPPALAETGSEG) shows a compositional bias: low complexity. Positions 217-221 (LAETG) match the LPXTG sorting signal motif. 2 consecutive propeptides (removed by sortase) follow at residues 219-252 (ETGSEGTLGAAAAGAVLIAGGAILYRRGRALSGR) and 221-252 (GSEGTLGAAAAGAVLIAGGAILYRRGRALSGR). At Thr-220 the chain carries Pentaglycyl murein peptidoglycan amidated threonine.

This sequence belongs to the chaplin family. Long chaplin subfamily.

It is found in the secreted. It localises to the cell wall. Functionally, one of 8 partially redundant surface-active proteins required for efficient formation of aerial mycelium; the short chaplins assemble into a hydrophobic, amyloidal fibrillar surface layer that envelopes and protects aerial hyphae and spores, presumably anchored to the long chaplins. Chaplins have an overlapping function with the surface-active SapB peptide; chaplins are essential on minimal medium while on rich medium both chaplins and SapB are required for efficient aerial hyphae formation. A minimal chaplin strain capable of forming aerial mycelium/hyphae on minimal medium contains ChpC, ChpE and ChpH. The strain also has restored rodlet formation on the hyphae surface. A second minimal chaplin strain with ChpA, ChpD and ChpE makes slightly less robust hyphae. The long chaplins (ChpA, ChpB, ChpC) are not absolutely necessary for short chaplin localization or rodlet formation, but probably play a role in initiating aerial hyphae development. Chaplins are also involved in cell attachment to a hydrophobic surface. This chain is Chaplin-A, found in Streptomyces coelicolor (strain ATCC BAA-471 / A3(2) / M145).